The primary structure comprises 141 residues: Ly6/PLAUR domain-containing protein 1 (141 aa).

The N-terminal stretch at 1–20 is a signal peptide; that stretch reads MWVLGIAATFCGLFWLPGLA. Cystine bridges form between Cys25–Cys54, Cys28–Cys37, Cys46–Cys71, Cys77–Cys100, Cys88–Cys97, and Cys101–Cys106. A UPAR/Ly6 domain is found at 25–107; that stretch reads CYQCEEFQLN…ISCCNTPLCN (83 aa). Residue Asn45 is glycosylated (N-linked (GlcNAc...) asparagine). The GPI-anchor amidated glycine moiety is linked to residue Gly115. Positions 116-141 are cleaved as a propeptide — removed in mature form; sequence SSASAIRPGLLTTLLFFHLALCLAHC.

In terms of assembly, interacts with CHRNA4 and nAChRs containing alpha-4:beta-2 (CHRNA4:CHRNB2) and alpha-7 (CHRNA7) subunits. In terms of tissue distribution, preferentially expressed in the nervous system. Expressed in embryonic and postnatal postmitotic central and peripheral neurons including subpopulations of motor neurons, sensory neurons, interneurons and neurons of the autonomous nervous system. Expressed around the growing nerves in the limb bud. Expressed at high levels in specific brain regions such as the prefrontal cortex, amygdala, hippocampus, mediodorsal thalamus, dentate gyrus and specific brainstem nuclei (at protein level).

The protein localises to the cell membrane. Its function is as follows. Believed to act as a modulator of nicotinic acetylcholine receptors (nAChRs) activity. In vitro increases receptor desensitization and decreases affinity for ACh of alpha-4:beta-2-containing nAChRs. May play a role in the intracellular trafficking of alpha-4:beta-2 and alpha-7-containing nAChRs and may inhibit their expression at the cell surface. May be involved in the control of anxiety. In Mus musculus (Mouse), this protein is Ly6/PLAUR domain-containing protein 1 (Lypd1).